Here is a 77-residue protein sequence, read N- to C-terminus: EMBRYO SURROUNDING FACTOR 1-like protein 6 (77 aa).

The signal sequence occupies residues 1–25 (MSPSHFAILFIIVISLVPLHGYANG). 4 cysteine pairs are disulfide-bonded: Cys38–Cys53, Cys43–Cys72, Cys51–Cys68, and Cys54–Cys61.

It belongs to the MEG family.

The polypeptide is EMBRYO SURROUNDING FACTOR 1-like protein 6 (ESFL6) (Arabidopsis thaliana (Mouse-ear cress)).